Reading from the N-terminus, the 215-residue chain is Ribosomal RNA small subunit methyltransferase G (215 aa).

S-adenosyl-L-methionine is bound by residues G71, L76, and R135.

This sequence belongs to the methyltransferase superfamily. RNA methyltransferase RsmG family.

It localises to the cytoplasm. Functionally, specifically methylates the N7 position of a guanine in 16S rRNA. The chain is Ribosomal RNA small subunit methyltransferase G from Salinibacter ruber (strain DSM 13855 / M31).